The primary structure comprises 293 residues: tRNA pseudouridine synthase A (293 aa).

D67 serves as the catalytic Nucleophile. Residue Y125 participates in substrate binding.

It belongs to the tRNA pseudouridine synthase TruA family. Homodimer.

The enzyme catalyses uridine(38/39/40) in tRNA = pseudouridine(38/39/40) in tRNA. In terms of biological role, formation of pseudouridine at positions 38, 39 and 40 in the anticodon stem and loop of transfer RNAs. This Synechococcus sp. (strain CC9605) protein is tRNA pseudouridine synthase A.